The chain runs to 185 residues: Large ribosomal subunit protein uL13 (185 aa).

It belongs to the universal ribosomal protein uL13 family. In terms of assembly, part of the 50S ribosomal subunit.

Functionally, this protein is one of the early assembly proteins of the 50S ribosomal subunit, although it is not seen to bind rRNA by itself. It is important during the early stages of 50S assembly. The chain is Large ribosomal subunit protein uL13 from Pyrobaculum islandicum (strain DSM 4184 / JCM 9189 / GEO3).